The following is a 301-amino-acid chain: Formamidopyrimidine-DNA glycosylase (301 aa).

Residue Pro-2 is the Schiff-base intermediate with DNA of the active site. Glu-3 functions as the Proton donor in the catalytic mechanism. Lys-58 serves as the catalytic Proton donor; for beta-elimination activity. Residues His-109, Arg-131, and Lys-174 each contribute to the DNA site. The FPG-type zinc-finger motif lies at 265 to 301; that stretch reads SVYDREGQACRTPGCGGTVARIVQAGRSTFYCATCQK. Arg-291 serves as the catalytic Proton donor; for delta-elimination activity.

It belongs to the FPG family. Monomer. It depends on Zn(2+) as a cofactor.

It carries out the reaction Hydrolysis of DNA containing ring-opened 7-methylguanine residues, releasing 2,6-diamino-4-hydroxy-5-(N-methyl)formamidopyrimidine.. It catalyses the reaction 2'-deoxyribonucleotide-(2'-deoxyribose 5'-phosphate)-2'-deoxyribonucleotide-DNA = a 3'-end 2'-deoxyribonucleotide-(2,3-dehydro-2,3-deoxyribose 5'-phosphate)-DNA + a 5'-end 5'-phospho-2'-deoxyribonucleoside-DNA + H(+). Involved in base excision repair of DNA damaged by oxidation or by mutagenic agents. Acts as a DNA glycosylase that recognizes and removes damaged bases. Has a preference for oxidized purines, such as 7,8-dihydro-8-oxoguanine (8-oxoG). Has AP (apurinic/apyrimidinic) lyase activity and introduces nicks in the DNA strand. Cleaves the DNA backbone by beta-delta elimination to generate a single-strand break at the site of the removed base with both 3'- and 5'-phosphates. The sequence is that of Formamidopyrimidine-DNA glycosylase from Rhizobium leguminosarum bv. trifolii (strain WSM2304).